The following is a 387-amino-acid chain: Phosphoglycerate kinase (387 aa).

Substrate is bound by residues 21–23 (DLN), Arg36, 59–62 (HLGR), Arg114, and Arg147. ATP-binding positions include Lys198, Glu314, and 340-343 (GGDT).

It belongs to the phosphoglycerate kinase family. Monomer.

Its subcellular location is the cytoplasm. The enzyme catalyses (2R)-3-phosphoglycerate + ATP = (2R)-3-phospho-glyceroyl phosphate + ADP. The protein operates within carbohydrate degradation; glycolysis; pyruvate from D-glyceraldehyde 3-phosphate: step 2/5. The chain is Phosphoglycerate kinase from Erwinia tasmaniensis (strain DSM 17950 / CFBP 7177 / CIP 109463 / NCPPB 4357 / Et1/99).